A 938-amino-acid polypeptide reads, in one-letter code: AP-4 complex subunit epsilon (938 aa).

HEAT repeat units lie at residues 118–153 (DLII…INEE), 154–190 (TIPA…KSPS), 192–227 (VSHL…EDVN), 234–272 (SSFV…IMAL), 321–358 (KLLE…ISPD), 359–395 (IAEQ…SSNV), 397–431 (VIVD…QFAP), 454–495 (KVAH…EPKL), 517–556 (YSAS…FEIA), and 562–601 (DVLP…RAVE). Disordered stretches follow at residues 690-712 (EPSY…RESS), 725-867 (WGRP…VMGL), 880-912 (VDSL…KEAL), and 919-938 (RQMG…DLLG). A compositionally biased stretch (polar residues) spans 694 to 706 (YSESHQPISTSLV). The span at 728-744 (PSYQSTTAASSTTPQAA) shows a compositional bias: low complexity. Residues 764–779 (SSYEPKKPEIDPEKQR) are compositionally biased toward basic and acidic residues. The segment covering 808 to 821 (ANKTATVPKENQTP) has biased composition (polar residues). 2 stretches are compositionally biased toward low complexity: residues 853–863 (DSSSQDGGSSD) and 880–891 (VDSLLSELSDSS). An HEAT 11 repeat occupies 874–911 (VTTTTSVDSLLSELSDSSKGNSRTYQPQTSKGPNTKEA). The segment covering 892-906 (KGNSRTYQPQTSKGP) has biased composition (polar residues).

This sequence belongs to the adaptor complexes large subunit family. Adaptor protein complex 4 (AP-4) is a heterotetramer composed of two large adaptins (epsilon-type subunit and beta-type subunit), a medium adaptin (mu-type subunit) and a small adaptin (sigma-type subunit).

It is found in the golgi apparatus. The protein resides in the trans-Golgi network. The protein localises to the membrane. Its subcellular location is the coated pit. In terms of biological role, subunit of novel type of clathrin- or non-clathrin-associated protein coat involved in targeting proteins from the trans-Golgi network (TGN) to the endosomal-lysosomal system. The polypeptide is AP-4 complex subunit epsilon (Arabidopsis thaliana (Mouse-ear cress)).